A 318-amino-acid chain; its full sequence is Mitochondrial coenzyme A transporter SLC25A42 (318 aa).

Solcar repeat units follow at residues Arg31 to Ile117, Leu129 to Leu214, and Pro224 to Leu312. 6 helical membrane passes run Val33–Pro53, Leu89–Ser109, Leu135–Val155, Leu186–Phe206, Met230–Val250, and Leu293–Leu313.

It belongs to the mitochondrial carrier (TC 2.A.29) family.

It localises to the mitochondrion inner membrane. The enzyme catalyses ADP(out) + CoA(in) = ADP(in) + CoA(out). It catalyses the reaction 3'-dephospho-CoA(in) + ADP(out) = 3'-dephospho-CoA(out) + ADP(in). It carries out the reaction adenosine 3',5'-bisphosphate(in) + ADP(out) = adenosine 3',5'-bisphosphate(out) + ADP(in). The catalysed reaction is AMP(in) + ADP(out) = AMP(out) + ADP(in). The enzyme catalyses dADP(in) + ADP(out) = dADP(out) + ADP(in). It catalyses the reaction ADP(in) + ATP(out) = ADP(out) + ATP(in). Its function is as follows. Mitochondrial carrier mediating the transport of coenzyme A (CoA) in mitochondria in exchange for intramitochondrial (deoxy)adenine nucleotides and adenosine 3',5'-diphosphate. The sequence is that of Mitochondrial coenzyme A transporter SLC25A42 (Slc25a42) from Mus musculus (Mouse).